The chain runs to 138 residues: ATP synthase epsilon chain (138 aa).

This sequence belongs to the ATPase epsilon chain family. In terms of assembly, F-type ATPases have 2 components, CF(1) - the catalytic core - and CF(0) - the membrane proton channel. CF(1) has five subunits: alpha(3), beta(3), gamma(1), delta(1), epsilon(1). CF(0) has three main subunits: a, b and c.

It localises to the cell membrane. Produces ATP from ADP in the presence of a proton gradient across the membrane. In Streptococcus pyogenes serotype M3 (strain ATCC BAA-595 / MGAS315), this protein is ATP synthase epsilon chain.